The primary structure comprises 232 residues: Phosphatidylserine decarboxylase proenzyme (232 aa).

Ser-190 serves as the catalytic Schiff-base intermediate with substrate; via pyruvic acid. Ser-190 carries the post-translational modification Pyruvic acid (Ser); by autocatalysis.

The protein belongs to the phosphatidylserine decarboxylase family. PSD-A subfamily. In terms of assembly, heterodimer of a large membrane-associated beta subunit and a small pyruvoyl-containing alpha subunit. Requires pyruvate as cofactor. Post-translationally, is synthesized initially as an inactive proenzyme. Formation of the active enzyme involves a self-maturation process in which the active site pyruvoyl group is generated from an internal serine residue via an autocatalytic post-translational modification. Two non-identical subunits are generated from the proenzyme in this reaction, and the pyruvate is formed at the N-terminus of the alpha chain, which is derived from the carboxyl end of the proenzyme. The post-translation cleavage follows an unusual pathway, termed non-hydrolytic serinolysis, in which the side chain hydroxyl group of the serine supplies its oxygen atom to form the C-terminus of the beta chain, while the remainder of the serine residue undergoes an oxidative deamination to produce ammonia and the pyruvoyl prosthetic group on the alpha chain.

It is found in the cell membrane. It carries out the reaction a 1,2-diacyl-sn-glycero-3-phospho-L-serine + H(+) = a 1,2-diacyl-sn-glycero-3-phosphoethanolamine + CO2. The protein operates within phospholipid metabolism; phosphatidylethanolamine biosynthesis; phosphatidylethanolamine from CDP-diacylglycerol: step 2/2. Its function is as follows. Catalyzes the formation of phosphatidylethanolamine (PtdEtn) from phosphatidylserine (PtdSer). The polypeptide is Phosphatidylserine decarboxylase proenzyme (Agrobacterium fabrum (strain C58 / ATCC 33970) (Agrobacterium tumefaciens (strain C58))).